We begin with the raw amino-acid sequence, 459 residues long: Cysteine--tRNA ligase (459 aa).

A Zn(2+)-binding site is contributed by cysteine 28. The short motif at 30 to 40 (VTIYDLCHIGH) is the 'HIGH' region element. Residues cysteine 209, histidine 234, and glutamate 238 each coordinate Zn(2+). Positions 266-270 (KMSKS) match the 'KMSKS' region motif. Lysine 269 contacts ATP.

This sequence belongs to the class-I aminoacyl-tRNA synthetase family. As to quaternary structure, monomer. Zn(2+) is required as a cofactor.

The protein resides in the cytoplasm. It carries out the reaction tRNA(Cys) + L-cysteine + ATP = L-cysteinyl-tRNA(Cys) + AMP + diphosphate. This is Cysteine--tRNA ligase from Shewanella loihica (strain ATCC BAA-1088 / PV-4).